A 319-amino-acid chain; its full sequence is Probable murein peptide carboxypeptidase (319 aa).

Ser116 acts as the Nucleophile in catalysis. Catalysis depends on charge relay system residues Glu214 and His284.

The protein belongs to the peptidase S66 family.

It localises to the cytoplasm. The protein operates within cell wall degradation; peptidoglycan degradation. In terms of biological role, may be involved in the degradation of peptidoglycan by catalyzing the cleavage of the terminal D-alanine residue from cytoplasmic murein peptides. This chain is Probable murein peptide carboxypeptidase (ykfA), found in Bacillus subtilis (strain 168).